A 199-amino-acid chain; its full sequence is NAD(P)H dehydrogenase (quinone) (199 aa).

One can recognise a Flavodoxin-like domain in the interval 4-190 (VLVLYYSSYG…AMARFQGGHV (187 aa)). Residues 10-15 (SSYGHI) and 78-80 (TRF) each bind FMN. Position 12 (Y12) interacts with NAD(+). W98 is a substrate binding site. Residues 113-119 (STATQHG) and H134 contribute to the FMN site.

The protein belongs to the WrbA family. It depends on FMN as a cofactor.

It carries out the reaction a quinone + NADH + H(+) = a quinol + NAD(+). The catalysed reaction is a quinone + NADPH + H(+) = a quinol + NADP(+). In Azoarcus sp. (strain BH72), this protein is NAD(P)H dehydrogenase (quinone).